Reading from the N-terminus, the 161-residue chain is Disulfide bond formation protein B (161 aa).

Residues 1 to 8 (MQANSRTY) are Cytoplasmic-facing. Residues 9–25 (FLLIAIVSFAMVGAALY) traverse the membrane as a helical segment. Topologically, residues 26 to 43 (MQYAENLQPCPLCIMQRF) are periplasmic. Cys35 and Cys38 form a disulfide bridge. Residues 44 to 58 (AFIGIGIFSLLAVIA) traverse the membrane as a helical segment. The Cytoplasmic segment spans residues 59-63 (QNTRT). A helical transmembrane segment spans residues 64–81 (LWQGLGMLSGVGGIAVAG). The Periplasmic segment spans residues 82–136 (YQVALLMNPKASCGIDPLENWVNSLPTAKLLPQVFYSDGLCTAPTPPILGLSIPA). Cys94 and Cys122 are disulfide-bonded. Residues 137 to 155 (WSLIWLLILTLTLAVGLIR) form a helical membrane-spanning segment. The Cytoplasmic segment spans residues 156–161 (REKHFR).

Belongs to the DsbB family.

It is found in the cell inner membrane. Required for disulfide bond formation in some periplasmic proteins. Acts by oxidizing the DsbA protein. The sequence is that of Disulfide bond formation protein B from Cupriavidus metallidurans (strain ATCC 43123 / DSM 2839 / NBRC 102507 / CH34) (Ralstonia metallidurans).